Here is a 681-residue protein sequence, read N- to C-terminus: Calpain-C (681 aa).

The Calpain catalytic domain occupies 18–331; the sequence is LWEDPDFPAV…FSTMEVVYLD (314 aa). Positions 332-481 are domain III; it reads TETSNDEEML…ILGTGSFRLS (150 aa). Residues 482-514 are linker; it reads CLETQTMILLDPFPALKSTDAERCGGPKVKSVC. The tract at residues 515–681 is domain IV; that stretch reads QYEPVYMQLA…HDWIKSILSC (167 aa). The region spanning 552–587 is the EF-hand domain; that stretch reads ANIDICRQVIALQDRSGSGRITFQQFKTFMVNLKSW. Ca(2+) is bound by residues Asp-565, Ser-567, Ser-569, and Arg-571.

The protein belongs to the peptidase C2 family. As to expression, localized to the salivary glands in the larva.

The protein localises to the cytoplasm. Not known; does not seem to have protease activity. This chain is Calpain-C, found in Drosophila melanogaster (Fruit fly).